We begin with the raw amino-acid sequence, 270 residues long: Putative hydro-lyase ACIAD2519 (270 aa).

It belongs to the D-glutamate cyclase family.

The polypeptide is Putative hydro-lyase ACIAD2519 (Acinetobacter baylyi (strain ATCC 33305 / BD413 / ADP1)).